Reading from the N-terminus, the 218-residue chain is tRNA (guanine-N(7)-)-methyltransferase (218 aa).

Residues Glu43, Asp68, Glu101, and Asn124 each contribute to the S-adenosyl-L-methionine site. Substrate-binding residues include Lys128 and Asp160.

Belongs to the class I-like SAM-binding methyltransferase superfamily. TrmB family.

The enzyme catalyses guanosine(46) in tRNA + S-adenosyl-L-methionine = N(7)-methylguanosine(46) in tRNA + S-adenosyl-L-homocysteine. It participates in tRNA modification; N(7)-methylguanine-tRNA biosynthesis. Catalyzes the formation of N(7)-methylguanine at position 46 (m7G46) in tRNA. The chain is tRNA (guanine-N(7)-)-methyltransferase from Acetivibrio thermocellus (strain ATCC 27405 / DSM 1237 / JCM 9322 / NBRC 103400 / NCIMB 10682 / NRRL B-4536 / VPI 7372) (Clostridium thermocellum).